The chain runs to 330 residues: GTPase Obg (330 aa).

The region spanning 1–159 (MQFIDQARIT…WPLQLELKLL (159 aa)) is the Obg domain. The region spanning 160 to 328 (AEVGIIGLPN…LLERVWKELG (169 aa)) is the OBG-type G domain. ATP is bound by residues 166 to 173 (GLPNAGKS), 191 to 195 (FTTLV), 213 to 216 (DIPG), 280 to 283 (NKQE), and 309 to 311 (SAA). Ser173 and Thr193 together coordinate Mg(2+).

The protein belongs to the TRAFAC class OBG-HflX-like GTPase superfamily. OBG GTPase family. As to quaternary structure, monomer. It depends on Mg(2+) as a cofactor.

Its subcellular location is the cytoplasm. An essential GTPase which binds GTP, GDP and possibly (p)ppGpp with moderate affinity, with high nucleotide exchange rates and a fairly low GTP hydrolysis rate. Plays a role in control of the cell cycle, stress response, ribosome biogenesis and in those bacteria that undergo differentiation, in morphogenesis control. The protein is GTPase Obg of Parasynechococcus marenigrum (strain WH8102).